The primary structure comprises 238 residues: Survival of motor neuron-related-splicing factor 30 (238 aa).

The Tudor domain occupies 72–132 (SWKVGDKCMA…KPVEEGRKAK (61 aa)). The Nuclear localization signal signature appears at 142 to 160 (KKEMIAQQREYKKKKALKK). At Ser-201 the chain carries Phosphoserine. An N6-acetyllysine modification is found at Lys-219.

Belongs to the SMN family. Associates with spliceosomes. Associates with U4/U5/U6 tri-snRNP and with U2 snRNP.

It localises to the nucleus speckle. It is found in the nucleus. Its subcellular location is the cajal body. Its function is as follows. Involved in spliceosome assembly. In Bos taurus (Bovine), this protein is Survival of motor neuron-related-splicing factor 30 (SMNDC1).